Consider the following 145-residue polypeptide: Neuromedin-S (145 aa).

The signal sequence occupies residues 1–25 (MKYLAQFPSILAIYCFCLLQIPSSG). Propeptides lie at residues 26 to 64 (FPRP…IYKR), 65 to 100 (FLFH…ADRR), and 101 to 103 (MKT). Asparagine amide is present on N136. Residues 139–145 (NLDFDTW) constitute a propeptide that is removed on maturation.

It belongs to the NmU family.

The protein resides in the secreted. Implicated in the regulation of circadian rhythms through autocrine and/or paracrine actions. The protein is Neuromedin-S (NMS) of Bos taurus (Bovine).